We begin with the raw amino-acid sequence, 287 residues long: uncharacterized protein (287 aa).

This sequence belongs to the A.longa ORF167/ORF288 family.

The protein localises to the plastid. This is an uncharacterized protein from Euglena longa (Euglenophycean alga).